The primary structure comprises 149 residues: 3-hydroxyacyl-[acyl-carrier-protein] dehydratase FabZ (149 aa).

Histidine 53 is an active-site residue.

Belongs to the thioester dehydratase family. FabZ subfamily.

The protein resides in the cytoplasm. The catalysed reaction is a (3R)-hydroxyacyl-[ACP] = a (2E)-enoyl-[ACP] + H2O. Involved in unsaturated fatty acids biosynthesis. Catalyzes the dehydration of short chain beta-hydroxyacyl-ACPs and long chain saturated and unsaturated beta-hydroxyacyl-ACPs. In Neisseria meningitidis serogroup B (strain ATCC BAA-335 / MC58), this protein is 3-hydroxyacyl-[acyl-carrier-protein] dehydratase FabZ.